We begin with the raw amino-acid sequence, 273 residues long: SPRY domain-containing SOCS box protein 1 (273 aa).

At Tyr-31 the chain carries Phosphotyrosine; by MET. The 199-residue stretch at 33 to 231 (KPTRLDLLLD…IRMRYLNGLD (199 aa)) folds into the B30.2/SPRY domain. Residues 232–273 (PEPLPLMDLCRRSVRLALGRERLGEIHTLPLPASLKAYLLYQ) enclose the SOCS box domain.

This sequence belongs to the SPSB family. In terms of assembly, component of the probable ECS(SPSB1) E3 ubiquitin-protein ligase complex which contains CUL5, RNF7/RBX2, Elongin BC complex and SPSB1. Interacts with CUL5, RNF7, ELOB and ELOC. Directly interacts with MET tyrosine kinase domain in the presence and in the absence of HGF, however HGF treatment has a positive effect on this interaction. When phosphorylated, interacts with RASA1 without affecting its stability. Interacts (via B30.2/SPRY domain) with PAWR; this interaction is direct and occurs in association with the Elongin BC complex. Interacts with NOS2. Interacts with EPHB2.

It is found in the cytoplasm. Its subcellular location is the cytosol. It participates in protein modification; protein ubiquitination. In terms of biological role, substrate recognition component of a SCF-like ECS (Elongin BC-CUL2/5-SOCS-box protein) E3 ubiquitin-protein ligase complex which mediates the ubiquitination and subsequent proteasomal degradation of target proteins. Negatively regulates nitric oxide (NO) production and limits cellular toxicity in activated macrophages by mediating the ubiquitination and proteasomal degradation of NOS2. Acts as a bridge which links NOS2 with the ECS E3 ubiquitin ligase complex components ELOC and CUL5. The chain is SPRY domain-containing SOCS box protein 1 (SPSB1) from Homo sapiens (Human).